The chain runs to 279 residues: Probable ribosomal RNA small subunit methyltransferase A (279 aa).

Positions 23, 25, 50, 71, 95, and 110 each coordinate S-adenosyl-L-methionine.

Belongs to the class I-like SAM-binding methyltransferase superfamily. rRNA adenine N(6)-methyltransferase family. RsmA subfamily.

Its subcellular location is the cytoplasm. Specifically dimethylates two adjacent adenosines in the loop of a conserved hairpin near the 3'-end of 16S rRNA in the 30S particle. May play a critical role in biogenesis of 30S subunits. The polypeptide is Probable ribosomal RNA small subunit methyltransferase A (Thermococcus kodakarensis (strain ATCC BAA-918 / JCM 12380 / KOD1) (Pyrococcus kodakaraensis (strain KOD1))).